A 120-amino-acid chain; its full sequence is NAD(P)H-quinone oxidoreductase subunit 3, chloroplastic (120 aa).

3 helical membrane passes run 9-29 (IFWA…LISG), 64-84 (MFAL…PWAM), and 88-108 (VLGV…IVGS).

The protein belongs to the complex I subunit 3 family. NDH is composed of at least 16 different subunits, 5 of which are encoded in the nucleus.

It localises to the plastid. The protein localises to the chloroplast thylakoid membrane. It carries out the reaction a plastoquinone + NADH + (n+1) H(+)(in) = a plastoquinol + NAD(+) + n H(+)(out). It catalyses the reaction a plastoquinone + NADPH + (n+1) H(+)(in) = a plastoquinol + NADP(+) + n H(+)(out). Functionally, NDH shuttles electrons from NAD(P)H:plastoquinone, via FMN and iron-sulfur (Fe-S) centers, to quinones in the photosynthetic chain and possibly in a chloroplast respiratory chain. The immediate electron acceptor for the enzyme in this species is believed to be plastoquinone. Couples the redox reaction to proton translocation, and thus conserves the redox energy in a proton gradient. The protein is NAD(P)H-quinone oxidoreductase subunit 3, chloroplastic of Liriodendron tulipifera (Tuliptree).